The primary structure comprises 95 residues: MLDLVKYPVITQKTYIALFKDRQYTFDVDLRLTKPQIKKVFETLFNVDVISVNTHIPPRQKIRVGLAQGYRPRYKRAIITLKEGQSINYSLKNDN.

It belongs to the universal ribosomal protein uL23 family. In terms of assembly, part of the 50S ribosomal subunit.

The protein localises to the plastid. It localises to the chloroplast. In terms of biological role, binds to 23S rRNA. This Chlamydomonas reinhardtii (Chlamydomonas smithii) protein is Large ribosomal subunit protein uL23c (rpl23).